We begin with the raw amino-acid sequence, 803 residues long: Elongation factor G, mitochondrial (803 aa).

Residues 1–24 constitute a mitochondrion transit peptide; that stretch reads MVRPAQVRAFSGLARSATSTRLIP. The 287-residue stretch at 102–388 folds into the tr-type G domain; the sequence is SKVRNIGIAA…GVCDYLPNPS (287 aa). GTP-binding positions include 111–118, 186–190, and 240–243; these read AHIDSGKT, DTPGH, and NKMD.

It belongs to the TRAFAC class translation factor GTPase superfamily. Classic translation factor GTPase family. EF-G/EF-2 subfamily.

It localises to the mitochondrion. It functions in the pathway protein biosynthesis; polypeptide chain elongation. Functionally, mitochondrial GTPase that catalyzes the GTP-dependent ribosomal translocation step during translation elongation. During this step, the ribosome changes from the pre-translocational (PRE) to the post-translocational (POST) state as the newly formed A-site-bound peptidyl-tRNA and P-site-bound deacylated tRNA move to the P and E sites, respectively. Catalyzes the coordinated movement of the two tRNA molecules, the mRNA and conformational changes in the ribosome. This is Elongation factor G, mitochondrial (mef1) from Talaromyces marneffei (strain ATCC 18224 / CBS 334.59 / QM 7333) (Penicillium marneffei).